The chain runs to 1081 residues: Dyslexia-associated protein KIAA0319 homolog (1081 aa).

Residues 1–22 (MVSPPGVLSSLLLLAAMAGGSS) form the signal peptide. Positions 23–99 (QQCSEGRTYS…PRTTGPIRSY (77 aa)) constitute an MANSC domain. Residues 23 to 964 (QQCSEGRTYS…WDGESNCEWS (942 aa)) are Extracellular-facing. 3 disordered regions span residues 141–160 (LPFL…SDDY), 168–216 (LQPS…DLTP), and 228–298 (NEST…TTVE). Polar residues-rich tracts occupy residues 197-209 (ASAT…ASTE), 228-253 (NEST…TASP), and 283-298 (HNPS…TTVE). PKD domains are found at residues 345–436 (AVSA…VMPA), 444–533 (VAIV…IRGS), 539–629 (VANA…VQAE), 630–723 (NNQA…VKKE), and 729–820 (RAQA…VLPD). N-linked (GlcNAc...) asparagine glycans are attached at residues asparagine 430 and asparagine 522. A helical transmembrane segment spans residues 965–985 (VFYVAALALTLTVLTGAVTWV). Residues 986-1081 (CICCCRRRKR…VSFGYYSKDR (96 aa)) are Cytoplasmic-facing. The short motif at 1004–1007 (YTIL) is the Endocytosis signal element.

In terms of assembly, homodimer. Interacts with AP2M1; required for clathrin-mediated endocytosis. In terms of processing, N-glycosylated. O-glycosylated. Post-translationally, shedding of the extracellular domain and intramembrane cleavage produce several proteolytic products. The intramembrane cleavage releases a soluble cytoplasmic polypeptide that translocates to the nucleolus. As to expression, highly expressed during development in ventricular zone, intermediate zone, cortical plate, striatum, hippocampus, and brain stem.

Its subcellular location is the cell membrane. The protein localises to the early endosome membrane. In terms of biological role, involved in neuronal migration during development of the cerebral neocortex. May function in a cell autonomous and a non-cell autonomous manner and play a role in appropriate adhesion between migrating neurons and radial glial fibers. May also regulate growth and differentiation of dendrites. In Rattus norvegicus (Rat), this protein is Dyslexia-associated protein KIAA0319 homolog.